A 136-amino-acid chain; its full sequence is Nucleoside diphosphate kinase (136 aa).

ATP-binding residues include K10, F58, R86, T92, R104, and N114. Residue H117 is the Pros-phosphohistidine intermediate of the active site.

Belongs to the NDK family. Homotetramer. The cofactor is Mg(2+).

The protein localises to the cytoplasm. It carries out the reaction a 2'-deoxyribonucleoside 5'-diphosphate + ATP = a 2'-deoxyribonucleoside 5'-triphosphate + ADP. The catalysed reaction is a ribonucleoside 5'-diphosphate + ATP = a ribonucleoside 5'-triphosphate + ADP. Major role in the synthesis of nucleoside triphosphates other than ATP. The ATP gamma phosphate is transferred to the NDP beta phosphate via a ping-pong mechanism, using a phosphorylated active-site intermediate. This chain is Nucleoside diphosphate kinase, found in Corynebacterium efficiens (strain DSM 44549 / YS-314 / AJ 12310 / JCM 11189 / NBRC 100395).